The primary structure comprises 805 residues: Phosphoinositide 3-kinase adapter protein 1 (805 aa).

A TIR domain is found at 8–145; the sequence is RGCDILIVYS…AVKKAISEDS (138 aa). A necessary and sufficient to mediate inhibition of NF-kappa-B downstream of activated TLRs; may mediate interaction with MYD88 and TIRAP region spans residues 10–144; that stretch reads CDILIVYSPD…AAVKKAISED (135 aa). Residues 145 to 165 form a disordered region; the sequence is SGCDSVTDTEPEDEKVVSYSK. The DBB domain occupies 181 to 317; that stretch reads VQPDRIRCGA…NIPASGLHLF (137 aa). A Phosphotyrosine modification is found at Tyr-263. 3 positions are modified to phosphotyrosine; by SYK: Tyr-419, Tyr-444, and Tyr-459. Residue Tyr-513 is modified to Phosphotyrosine; by ABL1. A disordered region spans residues 527–547; that stretch reads ASRPPVPVPRPETTAPGAHQL. Residues Tyr-553 and Tyr-570 each carry the phosphotyrosine; by ABL1 modification. Residues 571–590 are disordered; the sequence is VSSESIRKGPPVRPWRDRPQ. Tyr-594 is subject to Phosphotyrosine; by ABL1. A Phosphoserine modification is found at Ser-642. Residues 645–667 are a coiled coil; it reads FQQENLKRLRDSITRRQREKQKS. Residues 654–672 are compositionally biased toward basic and acidic residues; the sequence is RDSITRRQREKQKSGKQTD. Positions 654 to 679 are disordered; that stretch reads RDSITRRQREKQKSGKQTDLEITVPI. Position 694 is a phosphotyrosine; by ABL1 (Tyr-694). Residues 697 to 805 are disordered; the sequence is GPRKSVIPPR…PPPPVPPRGR (109 aa). Residues 707 to 716 are compositionally biased toward basic and acidic residues; sequence TELRRGDWKT. A compositionally biased stretch (low complexity) spans 717 to 740; the sequence is DSTSSTASSTSNRSSTRSLLSVSS. Residue Ser-718 is modified to Phosphoserine. Positions 795–805 are enriched in pro residues; that stretch reads HPPPPVPPRGR.

Homooligomer. Interacts (phosphorylated on tyrosine residues within YXXM motifs) with PIK3R1 (via SH2 domain); required for BCR- and TLR-mediated activation of phosphoinositide 3-kinase. Interacts (via polyproline C-terminal region) with ABI1 (via SH3 domain); the interaction promotes phosphorylation of PIK3AP1 by ABL1. May interact with MYD88 and TIRAP. In terms of processing, constitutively phosphorylated. Phosphorylated on tyrosine residues in C-terminal region by ABL1. Phosphorylated on tyrosine residues within the YXXM motifs by BTK and SYK. Isoform 1 and isoform 2 are phosphorylated on tyrosine residues, most likely within the YXXM motifs, via CD19 activation. Toll-like receptor activation induces appearance of a phosphorylated form associated with membranes. Expressed in natural killer (NK) cells.

It localises to the cytoplasm. The protein localises to the cell membrane. Signaling adapter that contributes to B-cell development by linking B-cell receptor (BCR) signaling to the phosphoinositide 3-kinase (PI3K)-Akt signaling pathway. Has a complementary role to the BCR coreceptor CD19, coupling BCR and PI3K activation by providing a docking site for the PI3K subunit PIK3R1. Alternatively, links Toll-like receptor (TLR) signaling to PI3K activation, a process preventing excessive inflammatory cytokine production. Also involved in the activation of PI3K in natural killer cells. May be involved in the survival of mature B-cells via activation of REL. The polypeptide is Phosphoinositide 3-kinase adapter protein 1 (PIK3AP1) (Homo sapiens (Human)).